Reading from the N-terminus, the 754-residue chain is 1,4-alpha-glucan branching enzyme GlgB (754 aa).

Aspartate 431 (nucleophile) is an active-site residue. Residue glutamate 484 is the Proton donor of the active site.

This sequence belongs to the glycosyl hydrolase 13 family. GlgB subfamily. Monomer.

The enzyme catalyses Transfers a segment of a (1-&gt;4)-alpha-D-glucan chain to a primary hydroxy group in a similar glucan chain.. The protein operates within glycan biosynthesis; glycogen biosynthesis. Its function is as follows. Catalyzes the formation of the alpha-1,6-glucosidic linkages in glycogen by scission of a 1,4-alpha-linked oligosaccharide from growing alpha-1,4-glucan chains and the subsequent attachment of the oligosaccharide to the alpha-1,6 position. The protein is 1,4-alpha-glucan branching enzyme GlgB of Prochlorococcus marinus (strain MIT 9301).